A 195-amino-acid polypeptide reads, in one-letter code: MPHAEKGLTVGLFGGSFNPPHAGHALVAEIALRRLALDQLWWMVTPGNPLKSTRELAPLAERLQLSEQIARNPKIKVTAFEAAHHVRYTADTLALVKARNPGVDFVWIMGADSLRDFHRWQRWREIVLTFPIAVIDRPGATLSFLSSVVAKTFDYARIDEGDAPLLARMRAPAWTFIHGPRSSLSSSAIRKMAKG.

This sequence belongs to the NadD family.

It carries out the reaction nicotinate beta-D-ribonucleotide + ATP + H(+) = deamido-NAD(+) + diphosphate. It functions in the pathway cofactor biosynthesis; NAD(+) biosynthesis; deamido-NAD(+) from nicotinate D-ribonucleotide: step 1/1. In terms of biological role, catalyzes the reversible adenylation of nicotinate mononucleotide (NaMN) to nicotinic acid adenine dinucleotide (NaAD). The protein is Probable nicotinate-nucleotide adenylyltransferase of Mesorhizobium japonicum (strain LMG 29417 / CECT 9101 / MAFF 303099) (Mesorhizobium loti (strain MAFF 303099)).